The primary structure comprises 333 residues: uncharacterized protein (333 aa).

A signal peptide spans 1–23 (MSRSFMIILTIMLIALSLGEVLA). A helical transmembrane segment spans residues 232–252 (SFFLGVLVTLMILSPVIVYLW).

It is found in the membrane. This is an uncharacterized protein from Pyrococcus abyssi (strain GE5 / Orsay).